A 273-amino-acid chain; its full sequence is Proteasome subunit beta type-7-A (273 aa).

Positions 1-37 are cleaved as a propeptide — removed in mature form; sequence MSQSTVDVPPKGGFSFDLCKRNDMLTQKGLKAPSFLK. Thr40 serves as the catalytic Nucleophile.

Belongs to the peptidase T1B family. In terms of assembly, component of the 20S core complex of the 26S proteasome. The 26S proteasome is composed of a core protease (CP), known as the 20S proteasome, capped at one or both ends by the 19S regulatory particle (RP/PA700). The 20S proteasome core is composed of 28 subunits that are arranged in four stacked rings, resulting in a barrel-shaped structure. The two end rings are each formed by seven alpha subunits, and the two central rings are each formed by seven beta subunits. The catalytic chamber with the active sites is on the inside of the barrel.

It localises to the cytoplasm. It is found in the nucleus. It catalyses the reaction Cleavage of peptide bonds with very broad specificity.. The proteasome is a multicatalytic proteinase complex which is characterized by its ability to cleave peptides with Arg, Phe, Tyr, Leu, and Glu adjacent to the leaving group at neutral or slightly basic pH. The proteasome has an ATP-dependent proteolytic activity. This Arabidopsis thaliana (Mouse-ear cress) protein is Proteasome subunit beta type-7-A (PBB1).